The chain runs to 652 residues: Acetyl-coenzyme A synthetase (652 aa).

Residues Arg191–Arg194, Thr311, and Asn335 each bind CoA. ATP is bound by residues Gly387–Pro389, Asp411–Thr416, Asp500, and Arg515. Ser523 is a binding site for CoA. Position 526 (Arg526) interacts with ATP. The Mg(2+) site is built by Val537, His539, and Ile542. Arg584 lines the CoA pocket. The residue at position 609 (Lys609) is an N6-acetyllysine.

It belongs to the ATP-dependent AMP-binding enzyme family. Mg(2+) serves as cofactor. Acetylated. Deacetylation by the SIR2-homolog deacetylase activates the enzyme.

It catalyses the reaction acetate + ATP + CoA = acetyl-CoA + AMP + diphosphate. In terms of biological role, catalyzes the conversion of acetate into acetyl-CoA (AcCoA), an essential intermediate at the junction of anabolic and catabolic pathways. Acs undergoes a two-step reaction. In the first half reaction, Acs combines acetate with ATP to form acetyl-adenylate (AcAMP) intermediate. In the second half reaction, it can then transfer the acetyl group from AcAMP to the sulfhydryl group of CoA, forming the product AcCoA. Functionally, enables the cell to use acetate during aerobic growth to generate energy via the TCA cycle, and biosynthetic compounds via the glyoxylate shunt. Acetylates CheY, the response regulator involved in flagellar movement and chemotaxis. This Sodalis glossinidius (strain morsitans) protein is Acetyl-coenzyme A synthetase.